A 129-amino-acid polypeptide reads, in one-letter code: Small ribosomal subunit protein uS11 (129 aa).

This sequence belongs to the universal ribosomal protein uS11 family. Part of the 30S ribosomal subunit. Interacts with proteins S7 and S18. Binds to IF-3.

In terms of biological role, located on the platform of the 30S subunit, it bridges several disparate RNA helices of the 16S rRNA. Forms part of the Shine-Dalgarno cleft in the 70S ribosome. The sequence is that of Small ribosomal subunit protein uS11 from Carboxydothermus hydrogenoformans (strain ATCC BAA-161 / DSM 6008 / Z-2901).